Consider the following 358-residue polypeptide: Gap junction alpha-5 protein (358 aa).

Residues 1 to 19 are Cytoplasmic-facing; the sequence is MGDWSFLGEFLEEVHKHST. The helical transmembrane segment at 20-40 threads the bilayer; the sequence is VIGKVWLTVLFIFRMLVLGTA. Residues 41-76 are Extracellular-facing; the sequence is AESSWGDEQADFQCDTMQPGCGNVCYDQAFPISHIR. A helical transmembrane segment spans residues 77-97; sequence YWVLQIIFVSTPSLVYMGHAM. At 98–164 the chain is on the cytoplasmic side; it reads HTVRMQEKRK…CSILIRTTME (67 aa). A helical membrane pass occupies residues 165 to 185; the sequence is VAFIVGQYLLYGIFLDTLHVC. Over 186–205 the chain is Extracellular; the sequence is RRSPCPHPVNCYVSRPTEKN. Residues 206–226 form a helical membrane-spanning segment; the sequence is VFIVFMLAVAALSLFLSLAEL. Residues 227 to 358 are Cytoplasmic-facing; that stretch reads YHLGWKKLRQ…SKARSDDLSV (132 aa). The segment at 318–358 is disordered; sequence AQKPEVPNGASPGHRLPHGYQSDKRRLSKASSKARSDDLSV. 2 positions are modified to phosphoserine: S353 and S357.

The protein belongs to the connexin family. Alpha-type (group II) subfamily. A connexon is composed of a hexamer of connexins.

The protein localises to the cell membrane. Its subcellular location is the cell junction. The protein resides in the gap junction. Its function is as follows. One gap junction consists of a cluster of closely packed pairs of transmembrane channels, the connexons, through which materials of low MW diffuse from one cell to a neighboring cell. The protein is Gap junction alpha-5 protein (GJA5) of Canis lupus familiaris (Dog).